Consider the following 79-residue polypeptide: Cell division protein ZapB (79 aa).

Residues 3 to 79 adopt a coiled-coil conformation; the sequence is LEVFEKLEAK…QALLGRMEEV (77 aa).

Belongs to the ZapB family. Homodimer. The ends of the coiled-coil dimer bind to each other, forming polymers. Interacts with FtsZ.

The protein localises to the cytoplasm. In terms of biological role, non-essential, abundant cell division factor that is required for proper Z-ring formation. It is recruited early to the divisome by direct interaction with FtsZ, stimulating Z-ring assembly and thereby promoting cell division earlier in the cell cycle. Its recruitment to the Z-ring requires functional FtsA or ZipA. The protein is Cell division protein ZapB of Salmonella typhi.